Reading from the N-terminus, the 154-residue chain is Endoribonuclease YbeY (154 aa).

Residues His-116, His-120, and His-126 each coordinate Zn(2+).

It belongs to the endoribonuclease YbeY family. Requires Zn(2+) as cofactor.

It localises to the cytoplasm. Its function is as follows. Single strand-specific metallo-endoribonuclease involved in late-stage 70S ribosome quality control and in maturation of the 3' terminus of the 16S rRNA. This Chromohalobacter salexigens (strain ATCC BAA-138 / DSM 3043 / CIP 106854 / NCIMB 13768 / 1H11) protein is Endoribonuclease YbeY.